Consider the following 160-residue polypeptide: Epithelial membrane protein 1 (160 aa).

Residues 1 to 21 (MLVLLAAIFVVHIATCVMLFV) form a helical membrane-spanning segment. N-linked (GlcNAc...) asparagine glycosylation is found at Asn-35 and Asn-43. Helical transmembrane passes span 67 to 87 (FMILSIIFSVISLIIFVFQLF), 95 to 115 (FFLSGATMLVCWLCVLIGASI), and 137 to 157 (FILAWICFCFSFVVGVLYLVL).

This sequence belongs to the PMP-22/EMP/MP20 family. In terms of tissue distribution, most abundant in squamous epithelia.

The protein resides in the membrane. The sequence is that of Epithelial membrane protein 1 (EMP1) from Oryctolagus cuniculus (Rabbit).